Consider the following 250-residue polypeptide: Alpha/beta hydrolase nvfD (250 aa).

Catalysis depends on charge relay system residues Asp198 and His226.

Belongs to the AB hydrolase superfamily.

It participates in secondary metabolite biosynthesis; terpenoid biosynthesis. Its function is as follows. Alpha/beta hydrolase; part of the gene cluster that mediates the biosynthesis of novofumigatonin, a heavily oxygenated meroterpenoid containing a unique orthoester moiety. The first step of the pathway is the synthesis of 3,5-dimethylorsellinic acid (DMOA) by the polyketide synthase nvfA via condensation of one acetyl-CoA starter unit with 3 malonyl-CoA units and 2 methylations. DMOA is then converted to farnesyl-DMOA by the farnesyltransferase nvfB. Epoxydation by FAD-dependent monooxygenase nvfK, followed by a protonation-initiated cyclization catalyzed by the terpene cyclase nvfL leads to the production of asnavolin H. The short chain dehydrogenase nvfC then as a 3-OH dehydrogenase of asnovolin H to yield chemesin D. There are two branches to synthesize asnovolin A from chemesin D. In one branch, chemesin D undergoes Baeyer-Villiger oxidation by nvfH, methylation by nvfJ, and enoyl reduction by the nvfM D enoylreductase that reduces the double bond between C-5'and C-6', to form respectively asnovolin I, asnovolin K, and asnovolin A. In the other branch, the methylation precedes the Baeyer-Villiger oxidation and the enoyl reduction to yield asnovolin A via the asnovolin J intermediate. Asnovolin A is further converted to fumigatonoid A by the Fe(II)/2-oxoglutarate-dependent dioxygenase nvfI that catalyzes an endoperoxidation reaction. The alpha/beta hydrolase nvfD then acts as an epimerase that converts fumigatonoid A to its C-5' epimer, which then undergoes spontaneous or nvfD-catalyzed lactonization. The following step utilizes the ketoreductase nvfG to produce fumigatonoid B. The dioxygenase nvfE further converts fumigatonoid B into fumigatonoid C. Finally the Fe(II)/2-oxoglutarate-dependent dioxygenase nvfF catalyzes two rounds of oxidation to transform fumigatonoid C into the end product, novofumigatonin A. The polypeptide is Alpha/beta hydrolase nvfD (Aspergillus novofumigatus (strain IBT 16806)).